Consider the following 254-residue polypeptide: 5-oxoprolinase subunit A (254 aa).

This sequence belongs to the LamB/PxpA family. In terms of assembly, forms a complex composed of PxpA, PxpB and PxpC.

The enzyme catalyses 5-oxo-L-proline + ATP + 2 H2O = L-glutamate + ADP + phosphate + H(+). Its function is as follows. Catalyzes the cleavage of 5-oxoproline to form L-glutamate coupled to the hydrolysis of ATP to ADP and inorganic phosphate. This chain is 5-oxoprolinase subunit A, found in Burkholderia vietnamiensis (strain G4 / LMG 22486) (Burkholderia cepacia (strain R1808)).